The sequence spans 511 residues: MAALRGAAARFRGRAPGGARGAAGRQCYDLLVIGGGSGGLACAKEAAQLGKKVAVLDYVEPSPQGTRWGLGGTCVNVGCIPKKLMHQAALLGGMIRDAPHYGWGVAQAPHSWATLADAVQNHVKSLNWGHRIQLQDRKVKYFNVKASFVDTHTVCGVSKGGEETLLSAEHIVIATGGRPRYPTHIEGALEYGITSDDLFWLKESPGKTLVVGASYVALECAGLLTGLGLDTTVMIRSVPLRAFDQQMASLVTEHMAGHGTRILRGCAPEKVEKLPGQQLRVTWVDLTSDRKDAGTFDTVLWAIGRVPETASLNLEKAGVHTNPVTGKILVDAQETTSVPHIYAIGDVAEGRPELTPTAIMAGRLLAQRLSGRTSDLMDYSSVPTTVFTPLEYGCVGLSEEAAVARHGEEHVEVYHAFYKPLEFTVPQRDASQCYIKMVCLREPPQLVLGLHFLGPNAGEVIQGFALGIKCGASYQQLMRTVGIHPTCAEEVAKLRISKRSGLDPTVTGCUG.

The transit peptide at 1–21 (MAALRGAAARFRGRAPGGARG) directs the protein to the mitochondrion. Residue 29 to 58 (DLLVIGGGSGGLACAKEAAQLGKKVAVLDY) coordinates FAD. An intrachain disulfide couples cysteine 74 to cysteine 79. Lysine 316 bears the N6-succinyllysine mark. Catalysis depends on histidine 484, which acts as the Proton acceptor. Positions 509-510 (CU) form a cross-link, cysteinyl-selenocysteine (Cys-Sec). Residue selenocysteine 510 is a non-standard amino acid, selenocysteine.

Belongs to the class-I pyridine nucleotide-disulfide oxidoreductase family. Homodimer. FAD is required as a cofactor.

The protein resides in the mitochondrion. It carries out the reaction [thioredoxin]-dithiol + NADP(+) = [thioredoxin]-disulfide + NADPH + H(+). Inhibited by 1-chloro-2,4-dinitrobenzene and by zinc, calcium, magnesium and Fe(2+) ions. Its function is as follows. Involved in the control of reactive oxygen species levels and the regulation of mitochondrial redox homeostasis. Maintains thioredoxin in a reduced state. May play a role in redox-regulated cell signaling. This Bos taurus (Bovine) protein is Thioredoxin reductase 2, mitochondrial (TXNRD2).